The following is a 430-amino-acid chain: tRNA(Ile)-lysidine synthase (430 aa).

Residue 21–26 (SGGLDS) participates in ATP binding.

This sequence belongs to the tRNA(Ile)-lysidine synthase family.

Its subcellular location is the cytoplasm. It catalyses the reaction cytidine(34) in tRNA(Ile2) + L-lysine + ATP = lysidine(34) in tRNA(Ile2) + AMP + diphosphate + H(+). Its function is as follows. Ligates lysine onto the cytidine present at position 34 of the AUA codon-specific tRNA(Ile) that contains the anticodon CAU, in an ATP-dependent manner. Cytidine is converted to lysidine, thus changing the amino acid specificity of the tRNA from methionine to isoleucine. This is tRNA(Ile)-lysidine synthase from Salmonella typhi.